Consider the following 482-residue polypeptide: Putative L-cysteine desulfhydrase 1 (482 aa).

The segment covering 1–10 has biased composition (acidic residues); sequence MASIPPDDDA. A disordered region spans residues 1–45; the sequence is MASIPPDDDAAAAAAAGAAENGYGNGKGNGNGPAPRPPPAKRPRS. Residues 11–22 show a composition bias toward low complexity; it reads AAAAAAGAAENG. K276 bears the N6-(pyridoxal phosphate)lysine mark.

Belongs to the class-V pyridoxal-phosphate-dependent aminotransferase family. It depends on pyridoxal 5'-phosphate as a cofactor.

The catalysed reaction is L-cysteine + H2O = hydrogen sulfide + pyruvate + NH4(+) + H(+). In terms of biological role, catalyzes the production of hydrogen sulfide (H2S) from cysteine. This Oryza sativa subsp. japonica (Rice) protein is Putative L-cysteine desulfhydrase 1.